A 137-amino-acid polypeptide reads, in one-letter code: Nucleoside diphosphate kinase (137 aa).

ATP contacts are provided by Lys-10, Phe-58, Arg-86, Thr-92, Arg-103, and Asn-113. His-116 (pros-phosphohistidine intermediate) is an active-site residue.

It belongs to the NDK family. As to quaternary structure, homotetramer. The cofactor is Mg(2+).

Its subcellular location is the cytoplasm. It catalyses the reaction a 2'-deoxyribonucleoside 5'-diphosphate + ATP = a 2'-deoxyribonucleoside 5'-triphosphate + ADP. The catalysed reaction is a ribonucleoside 5'-diphosphate + ATP = a ribonucleoside 5'-triphosphate + ADP. Major role in the synthesis of nucleoside triphosphates other than ATP. The ATP gamma phosphate is transferred to the NDP beta phosphate via a ping-pong mechanism, using a phosphorylated active-site intermediate. The protein is Nucleoside diphosphate kinase of Helicobacter acinonychis (strain Sheeba).